The chain runs to 45 residues: Large ribosomal subunit protein bL34c (45 aa).

A compositionally biased stretch (polar residues) spans 1–10 (MSKGFSNGTN). The tract at residues 1-45 (MSKGFSNGTNIKRVRKSGFRARMSNSSGRKILNSRRRKQRKKIAL) is disordered. Positions 32 to 45 (LNSRRRKQRKKIAL) are enriched in basic residues.

It belongs to the bacterial ribosomal protein bL34 family.

The protein resides in the plastid. Its subcellular location is the chloroplast. The protein is Large ribosomal subunit protein bL34c of Gracilaria tenuistipitata var. liui (Red alga).